Here is a 344-residue protein sequence, read N- to C-terminus: MLTIYSDDHRLHHGRHELIGGQFTPCFEKPSRADMVLDRVKAVGLGEVRAPRDFGLEPIRRVHSEGFVRFLQNAWQDWLATGRSHDMLPIAWPTRRLRQTEPDNIDGRLGYYSFDAGAPITAGTWQAITSSANVALSGQSELANGARSVFSLCRPPGHHAAADYMGGYCFFNNAAIAAQAFLDRGAGRVAILDVDYHHGNGTQDIFYDRADVLFTSIHGDPRFEYPYFLGYADEKGNGVGTGYNFNYPLAAGSDWATWSQALQAAIRQIQAYAADALIVSLGVDTFKEDPISQFRLDSPDYLRMGEAIGKLGLATLFVMEGGYAVEEIGINAVNVLQGFEGVHR.

Residue His159 is the Proton donor/acceptor of the active site. Zn(2+) contacts are provided by Asp195, His197, and Asp284.

Belongs to the histone deacetylase family. Homodimer. It depends on Zn(2+) as a cofactor.

The enzyme catalyses N-acetylputrescine + H2O = putrescine + acetate. It catalyses the reaction N-acetylcadaverine + H2O = cadaverine + acetate. It functions in the pathway amine and polyamine metabolism. Catalyzes the deacetylation of acetylated polyamines such as N-acetylputrescine and N-acetylcadaverine. Plays an important role in the metabolism of acetylated polyamines in P.aeruginosa. Is involved in the degradation pathways of N-acetylputrescine and N-acetylcadaverine, that allow P.aeruginosa to utilize these acetylpolyamines as a carbon source under glucose starvation. Shows nearly no activity against N(1)-acetylspermine and N(1)-acetylspermidine. Can also hydrolyze artificial trifluoroacetylated lysine-derivative, and to a lesser extent, acetylated lysine-derivative. The sequence is that of Acetylpolyamine amidohydrolase 2 from Pseudomonas aeruginosa (strain ATCC 15692 / DSM 22644 / CIP 104116 / JCM 14847 / LMG 12228 / 1C / PRS 101 / PAO1).